Here is a 151-residue protein sequence, read N- to C-terminus: Probable cGMP 3',5'-cyclic phosphodiesterase subunit delta (151 aa).

The protein belongs to the PDE6D/unc-119 family. In terms of assembly, interacts with Pde6.

It localises to the nucleus. The protein localises to the cytoplasm. The sequence is that of Probable cGMP 3',5'-cyclic phosphodiesterase subunit delta from Drosophila virilis (Fruit fly).